Reading from the N-terminus, the 354-residue chain is Guanine nucleotide-binding protein G(o) subunit alpha (354 aa).

Glycine 2 carries N-myristoyl glycine lipidation. Cysteine 3 carries S-palmitoyl cysteine lipidation. The region spanning 32-354 (KDIKLLLLGA…ANNLRGCGLY (323 aa)) is the G-alpha domain. The G1 motif stretch occupies residues 35–48 (KLLLLGAGESGKST). GTP-binding positions include 40 to 47 (GAGESGKS), 176 to 182 (LRTRVKT), 201 to 205 (DVGGQ), 270 to 273 (NKKD), and alanine 326. 2 residues coordinate Mg(2+): serine 47 and threonine 182. Residues 174 to 182 (DILRTRVKT) form a G2 motif region. The tract at residues 197-206 (FKLFDVGGQR) is G3 motif. The interval 266–273 (ILFLNKKD) is G4 motif. Residues 324–329 (TCATDT) form a G5 motif region.

The protein belongs to the G-alpha family. G(i/o/t/z) subfamily. In terms of assembly, g proteins are composed of 3 units; alpha, beta and gamma. The alpha chain contains the guanine nucleotide binding site. Interacts (in GDP-bound form) with gpr-1; gpr-1 forms a complex with gpr-2 and lin-5. Interacts (in GDP-bound form) with gpb-1. Interacts (in GDP-bound form) with gbas-1 (via GBA motif); the interaction leads to activation of goa-1. Expressed in the ASER neuron and the intestine.

Functionally, guanine nucleotide-binding proteins (G proteins) are involved as modulators or transducers in various transmembrane signaling systems. In the 1-cell embryo, probably together with gpa-16, controls nuclear rotation and spindle elongation during mitosis. During the first embryonic cell divisions, plays a role in gpr-1/2 cortical localization and in the proper orientation of EMS blastomere mitotic spindle. Polarity determinants (par genes) may regulate lin-5/gpr-1/gpr-2/goa-1 locally to create the asymmetric forces that drive spindle movement. Involved in chemosensory responses to attractive and repellent odors detected by AWC and AWB sensory neurons, respectively. In ASER neurons, acts downstream of glr-3 to regulate cold avoidance behavior via calcium signaling, and it may also play a role in sensing cold in the intestine. Negatively regulates axon regeneration after injury downstream of the inhibitory compound arachidonoyl ethanolamide (AEA) by antagonizing the activation of the JNK pathway (mlk-1/mek-1/kgb-1). In neurons, may negatively regulate diacylglycerol (DAG) production mediated by egl-30 signaling cascade and thereby negatively regulates acetylcholine release. Couples to the muscarinic acetylcholine receptor gar-2 to negatively regulate cholinergic receptor activity in the presence of high levels of acetylcholine in ventral cord motor neurons. Plays a role in the navigational capacity of sperm and the targeting of sperm derived from males to the fertilization site in the uterus of hermaphrodites. Involved in egg-laying and in regulating dopamine-mediated locomotion. Most likely couples to the dopamine receptors dop-2 and dop-3 to positively regulate the dopamine-mediated suppression of crh-1/CREB1 transcription factor activation in cholinergic SIA neurons in the presence of food. This is Guanine nucleotide-binding protein G(o) subunit alpha from Caenorhabditis elegans.